Consider the following 362-residue polypeptide: Homoisocitrate dehydrogenase (362 aa).

79-81 (VQS) contacts NADH. S81 serves as a coordination point for (2R,3S)-homoisocitrate. Residues S81 and S91 each carry the phosphoserine modification. 6 residues coordinate (2R,3S)-homoisocitrate: R97, R107, R126, Y133, K196, and N198. N198 is a binding site for NADH. Residues D232, D256, and D260 each contribute to the Mg(2+) site. NADH contacts are provided by residues 289–293 (GSAPD) and N301.

It belongs to the isocitrate and isopropylmalate dehydrogenases family. Mg(2+) is required as a cofactor.

The protein resides in the cytoplasm. The enzyme catalyses (2R,3S)-homoisocitrate + NAD(+) = 2-oxoadipate + CO2 + NADH. It functions in the pathway amino-acid biosynthesis; L-lysine biosynthesis via AAA pathway; L-alpha-aminoadipate from 2-oxoglutarate: step 4/5. The chain is Homoisocitrate dehydrogenase (lys12) from Schizosaccharomyces pombe (strain 972 / ATCC 24843) (Fission yeast).